Here is a 374-residue protein sequence, read N- to C-terminus: Histidine biosynthesis bifunctional protein HisB (374 aa).

A histidinol-phosphatase region spans residues 1–183 (MKKKVLFIDR…RVAEFLFAGE (183 aa)). Catalysis depends on aspartate 9, which acts as the Nucleophile. Residues aspartate 9, aspartate 11, and aspartate 131 each coordinate Mg(2+). The active-site Proton donor is the aspartate 11. The segment at 184–374 (RRAEIRRTTK…FELPSSKGVL (191 aa)) is imidazoleglycerol-phosphate dehydratase.

The protein in the N-terminal section; belongs to the histidinol-phosphatase family. It in the C-terminal section; belongs to the imidazoleglycerol-phosphate dehydratase family. Requires Mg(2+) as cofactor.

It localises to the cytoplasm. The enzyme catalyses D-erythro-1-(imidazol-4-yl)glycerol 3-phosphate = 3-(imidazol-4-yl)-2-oxopropyl phosphate + H2O. The catalysed reaction is L-histidinol phosphate + H2O = L-histidinol + phosphate. Its pathway is amino-acid biosynthesis; L-histidine biosynthesis; L-histidine from 5-phospho-alpha-D-ribose 1-diphosphate: step 6/9. The protein operates within amino-acid biosynthesis; L-histidine biosynthesis; L-histidine from 5-phospho-alpha-D-ribose 1-diphosphate: step 8/9. This Bacteroides fragilis (strain ATCC 25285 / DSM 2151 / CCUG 4856 / JCM 11019 / LMG 10263 / NCTC 9343 / Onslow / VPI 2553 / EN-2) protein is Histidine biosynthesis bifunctional protein HisB.